The primary structure comprises 1413 residues: Leucine-rich repeat receptor protein kinase MSL1 (1413 aa).

The first 23 residues, 1–23 (MAPMLSIASRSPSPALIAPHASA), serve as a signal peptide directing secretion. Asparagine 153 and asparagine 192 each carry an N-linked (GlcNAc...) asparagine glycan. LRR repeat units follow at residues 185–209 (FQSL…MVNL), 210–233 (QHLQ…LFDL), 235–257 (MLKV…IAHL), 258–281 (QQLT…LGSL), 282–304 (KNLE…SFSN), 306–329 (SRLL…IRAL), 330–353 (VNLV…LCQL), 354–377 (KNLQ…IGNL), 379–401 (QLEV…IGNL), 402–425 (EILE…VGEL), 427–449 (NLRQ…LGNC), 450–473 (KKLT…LADL), 475–497 (AVVL…IQNW), 498–518 (SNVS…PGLP), 519–542 (LHLV…ICQG), 543–565 (TFLQ…TFKG), 567–589 (KNLT…YLAL), 590–613 (LPLV…LWES), 615–636 (TILD…SIGK), 637–661 (LLSL…IGAL), 662–685 (RNLT…LFNC), 687–709 (NLVT…ISHL), 710–733 (TKLN…LCVA), 745–769 (VQHI…INNC), 771–793 (ILVE…LAEL), 794–817 (RNIT…PVPL), 818–841 (ASLQ…IGNI), 843–866 (PQIT…LLCK), and 868–890 (SLNH…CHED). Residues asparagine 304 and asparagine 317 are each glycosylated (N-linked (GlcNAc...) asparagine). Asparagine 461, asparagine 496, and asparagine 499 each carry an N-linked (GlcNAc...) asparagine glycan. N-linked (GlcNAc...) asparagine glycans are attached at residues asparagine 554, asparagine 568, and asparagine 601. N-linked (GlcNAc...) asparagine glycans are attached at residues asparagine 663 and asparagine 697. An N-linked (GlcNAc...) asparagine glycan is attached at asparagine 768. Asparagine 795 is a glycosylation site (N-linked (GlcNAc...) asparagine). Residues asparagine 878, asparagine 901, asparagine 917, and asparagine 928 are each glycosylated (N-linked (GlcNAc...) asparagine). 2 LRR repeats span residues 918 to 942 (FTKL…IARV) and 944 to 966 (SLYY…ICGM). The N-linked (GlcNAc...) asparagine glycan is linked to asparagine 973. The helical transmembrane segment at 1016–1036 (TICCIATAIVIVLVVILVVYL) threads the bilayer. The Protein kinase domain occupies 1107–1401 (FDGMHVVGDG…IEAMEYGPLV (295 aa)). Residues 1113-1121 (VGDGGFGTV) and lysine 1135 contribute to the ATP site. The active-site Proton acceptor is aspartate 1234.

This sequence belongs to the protein kinase superfamily. Ser/Thr protein kinase family. Expressed in roots, leaves, shoots and spikelets.

The protein localises to the cell membrane. The enzyme catalyses L-seryl-[protein] + ATP = O-phospho-L-seryl-[protein] + ADP + H(+). The catalysed reaction is L-threonyl-[protein] + ATP = O-phospho-L-threonyl-[protein] + ADP + H(+). Receptor-like kinase that may play a role male and female sporogenesis. The protein is Leucine-rich repeat receptor protein kinase MSL1 of Oryza sativa subsp. japonica (Rice).